Here is a 260-residue protein sequence, read N- to C-terminus: Na(+)-translocating NADH-quinone reductase subunit C (260 aa).

Residues 12–32 traverse the membrane as a helical segment; it reads LLVIILLSLACSIIVAGSAVL. Threonine 226 carries the FMN phosphoryl threonine modification.

The protein belongs to the NqrC family. Composed of six subunits; NqrA, NqrB, NqrC, NqrD, NqrE and NqrF. Requires FMN as cofactor.

It localises to the cell inner membrane. The catalysed reaction is a ubiquinone + n Na(+)(in) + NADH + H(+) = a ubiquinol + n Na(+)(out) + NAD(+). Functionally, NQR complex catalyzes the reduction of ubiquinone-1 to ubiquinol by two successive reactions, coupled with the transport of Na(+) ions from the cytoplasm to the periplasm. NqrA to NqrE are probably involved in the second step, the conversion of ubisemiquinone to ubiquinol. In Pasteurella multocida (strain Pm70), this protein is Na(+)-translocating NADH-quinone reductase subunit C.